The primary structure comprises 95 residues: Protein TusB (95 aa).

Belongs to the DsrH/TusB family. In terms of assembly, heterohexamer, formed by a dimer of trimers. The hexameric TusBCD complex contains 2 copies each of TusB, TusC and TusD. The TusBCD complex interacts with TusE.

The protein resides in the cytoplasm. Its function is as follows. Part of a sulfur-relay system required for 2-thiolation of 5-methylaminomethyl-2-thiouridine (mnm(5)s(2)U) at tRNA wobble positions. This is Protein TusB from Shigella flexneri.